A 638-amino-acid polypeptide reads, in one-letter code: Bifunctional protein glk (638 aa).

Residues 1-20 (MSTGVQTKAAPGAGQHADGP) are disordered. Positions 1–341 (MSTGVQTKAA…QLSNRAGGSS (341 aa)) are glucokinase. 24-29 (ADIGGT) is a binding site for ATP. The region spanning 342–418 (SAVFERIRQM…LKLATGLTGT (77 aa)) is the HTH rpiR-type domain. Positions 342–638 (SAVFERIRQM…SHGAASSARD (297 aa)) are putative HTH-type transcriptional regulator. The segment at residues 378–397 (IVDIARKADVSQPTVIRFCR) is a DNA-binding region (H-T-H motif). Positions 462–601 (AIDLLNGARR…AVGVAIRRAV (140 aa)) constitute an SIS domain.

The protein in the N-terminal section; belongs to the bacterial glucokinase family.

The protein resides in the cytoplasm. It catalyses the reaction D-glucose + ATP = D-glucose 6-phosphate + ADP + H(+). The chain is Bifunctional protein glk (glk) from Paraburkholderia xenovorans (strain LB400).